Here is a 95-residue protein sequence, read N- to C-terminus: Integration host factor subunit beta (95 aa).

Residues R59–S95 form a disordered region. Basic and acidic residues predominate over residues L72–S95.

The protein belongs to the bacterial histone-like protein family. In terms of assembly, heterodimer of an alpha and a beta chain.

Its function is as follows. This protein is one of the two subunits of integration host factor, a specific DNA-binding protein that functions in genetic recombination as well as in transcriptional and translational control. The protein is Integration host factor subunit beta of Ectopseudomonas mendocina (strain ymp) (Pseudomonas mendocina).